The sequence spans 160 residues: Transmembrane protein 216 (160 aa).

Transmembrane regions (helical) follow at residues 41–61, 68–88, 101–121, and 134–154; these read WYFA…GVIL, LILD…RLFY, LFVS…YLLL, and AVLL…ISIF.

As to quaternary structure, part of the tectonic-like complex (also named B9 complex).

It is found in the membrane. The protein localises to the cytoplasm. It localises to the cytoskeleton. The protein resides in the cilium basal body. In terms of biological role, part of the tectonic-like complex which is required for tissue-specific ciliogenesis and may regulate ciliary membrane composition. In Danio rerio (Zebrafish), this protein is Transmembrane protein 216 (tmem216).